The following is a 232-amino-acid chain: Ornithine carbamoyltransferase (232 aa).

Residues glutamine 15, arginine 39, and 66–69 (HPTQ) contribute to the carbamoyl phosphate site. L-ornithine is bound by residues asparagine 99, aspartate 163, and 167–168 (SM). Carbamoyl phosphate-binding positions include 204-207 (HCLP) and threonine 232.

Belongs to the aspartate/ornithine carbamoyltransferase superfamily. OTCase family.

It localises to the cytoplasm. The enzyme catalyses carbamoyl phosphate + L-ornithine = L-citrulline + phosphate + H(+). The protein operates within amino-acid biosynthesis; L-arginine biosynthesis; L-arginine from L-ornithine and carbamoyl phosphate: step 1/3. Functionally, reversibly catalyzes the transfer of the carbamoyl group from carbamoyl phosphate (CP) to the N(epsilon) atom of ornithine (ORN) to produce L-citrulline. In Neisseria sicca, this protein is Ornithine carbamoyltransferase (argF).